We begin with the raw amino-acid sequence, 71 residues long: Hainantoxin-X-2 (71 aa).

The N-terminal stretch at 1–26 (MKTAIFTVVLALAVFAVLCLVVSTHA) is a signal peptide. A propeptide spanning residues 27–43 (ERHSKTDMEDSPMIQER) is cleaved from the precursor. 2 disulfides stabilise this stretch: C52–C65 and C61–C70.

This sequence belongs to the neurotoxin 36 family. 02 subfamily. In terms of tissue distribution, expressed by the venom gland.

The protein resides in the secreted. In terms of biological role, reversibly blocks N-type calcium channels (Cav2.2/CACNA1B) in rat dorsal root ganglion cells. Elicits no toxic symptoms in either vertebrates or invertebrates during a period of 48 hours post-injection, when it was assayed in vivo by direct injection into mice and cockroaches. In Cyriopagopus hainanus (Chinese bird spider), this protein is Hainantoxin-X-2.